Reading from the N-terminus, the 601-residue chain is Group B oligopeptidase PepB (601 aa).

Residue histidine 386 coordinates Zn(2+). Glutamate 387 is a catalytic residue. Positions 390 and 393 each coordinate Zn(2+).

Belongs to the peptidase M3B family. Zn(2+) is required as a cofactor.

The protein resides in the cytoplasm. Its function is as follows. Has oligopeptidase activity and degrades a variety of small bioactive peptides, including bradykinin, neurotensin, and peptide fragments of substance P and adrenocorticotropin. Also hydrolyzes the synthetic collagen-like substrate N-(3-[2-furyl]acryloyl)-Leu-Gly-Pro-Ala (FALGPA). This chain is Group B oligopeptidase PepB (pepB), found in Streptococcus agalactiae serotype III (strain NEM316).